The following is a 312-amino-acid chain: D-alanine--D-alanine ligase (312 aa).

An ATP-grasp domain is found at 108–308 (KLVWQQTGIP…YSELVVKVLS (201 aa)). 138 to 193 (AAKLGVPLFVKPASEGSSVAVEKVKSADALPAALEEAAKHDKIVIVEKSIEGGGEY) is an ATP binding site. The Mg(2+) site is built by Asp262, Glu275, and Asn277.

This sequence belongs to the D-alanine--D-alanine ligase family. It depends on Mg(2+) as a cofactor. Requires Mn(2+) as cofactor.

The protein resides in the cytoplasm. It carries out the reaction 2 D-alanine + ATP = D-alanyl-D-alanine + ADP + phosphate + H(+). Its pathway is cell wall biogenesis; peptidoglycan biosynthesis. Functionally, cell wall formation. The polypeptide is D-alanine--D-alanine ligase (Burkholderia pseudomallei (strain 668)).